The chain runs to 251 residues: Aspartate/glutamate leucyltransferase (251 aa).

Belongs to the R-transferase family. Bpt subfamily.

It localises to the cytoplasm. It carries out the reaction N-terminal L-glutamyl-[protein] + L-leucyl-tRNA(Leu) = N-terminal L-leucyl-L-glutamyl-[protein] + tRNA(Leu) + H(+). It catalyses the reaction N-terminal L-aspartyl-[protein] + L-leucyl-tRNA(Leu) = N-terminal L-leucyl-L-aspartyl-[protein] + tRNA(Leu) + H(+). Functionally, functions in the N-end rule pathway of protein degradation where it conjugates Leu from its aminoacyl-tRNA to the N-termini of proteins containing an N-terminal aspartate or glutamate. In Xanthomonas axonopodis pv. citri (strain 306), this protein is Aspartate/glutamate leucyltransferase.